We begin with the raw amino-acid sequence, 364 residues long: Aminomethyltransferase (364 aa).

It belongs to the GcvT family. In terms of assembly, the glycine cleavage system is composed of four proteins: P, T, L and H.

It carries out the reaction N(6)-[(R)-S(8)-aminomethyldihydrolipoyl]-L-lysyl-[protein] + (6S)-5,6,7,8-tetrahydrofolate = N(6)-[(R)-dihydrolipoyl]-L-lysyl-[protein] + (6R)-5,10-methylene-5,6,7,8-tetrahydrofolate + NH4(+). Its function is as follows. The glycine cleavage system catalyzes the degradation of glycine. The sequence is that of Aminomethyltransferase from Shewanella sp. (strain MR-4).